Here is a 259-residue protein sequence, read N- to C-terminus: Glutamate racemase (259 aa).

Residues 7-8 (DS) and 39-40 (YG) each bind substrate. Cys70 acts as the Proton donor/acceptor in catalysis. Residue 71–72 (NT) coordinates substrate. The active-site Proton donor/acceptor is Cys180. 181-182 (TH) is a binding site for substrate.

Belongs to the aspartate/glutamate racemases family.

It carries out the reaction L-glutamate = D-glutamate. It functions in the pathway cell wall biogenesis; peptidoglycan biosynthesis. In terms of biological role, provides the (R)-glutamate required for cell wall biosynthesis. In Persephonella marina (strain DSM 14350 / EX-H1), this protein is Glutamate racemase.